The sequence spans 115 residues: T cell receptor beta variable 18 (115 aa).

The N-terminal stretch at 1-21 (MDTRLLCCAVICLLGAGLSNA) is a signal peptide. In terms of domain architecture, Ig-like spans 22-115 (GVMQNPRHLV…SAAYFCASSP (94 aa)). Cysteine 42 and cysteine 111 form a disulfide bridge.

As to quaternary structure, alpha-beta TR is a heterodimer composed of an alpha and beta chain; disulfide-linked. The alpha-beta TR is associated with the transmembrane signaling CD3 coreceptor proteins to form the TR-CD3 (TcR or TCR). The assembly of alpha-beta TR heterodimers with CD3 occurs in the endoplasmic reticulum where a single alpha-beta TR heterodimer associates with one CD3D-CD3E heterodimer, one CD3G-CD3E heterodimer and one CD247 homodimer forming a stable octameric structure. CD3D-CD3E and CD3G-CD3E heterodimers preferentially associate with TR alpha and TR beta chains, respectively. The association of the CD247 homodimer is the last step of TcR assembly in the endoplasmic reticulum and is required for transport to the cell surface.

It is found in the cell membrane. Functionally, v region of the variable domain of T cell receptor (TR) beta chain that participates in the antigen recognition. Alpha-beta T cell receptors are antigen specific receptors which are essential to the immune response and are present on the cell surface of T lymphocytes. Recognize peptide-major histocompatibility (MH) (pMH) complexes that are displayed by antigen presenting cells (APC), a prerequisite for efficient T cell adaptive immunity against pathogens. Binding of alpha-beta TR to pMH complex initiates TR-CD3 clustering on the cell surface and intracellular activation of LCK that phosphorylates the ITAM motifs of CD3G, CD3D, CD3E and CD247 enabling the recruitment of ZAP70. In turn ZAP70 phosphorylates LAT, which recruits numerous signaling molecules to form the LAT signalosome. The LAT signalosome propagates signal branching to three major signaling pathways, the calcium, the mitogen-activated protein kinase (MAPK) kinase and the nuclear factor NF-kappa-B (NF-kB) pathways, leading to the mobilization of transcription factors that are critical for gene expression and essential for T cell growth and differentiation. The T cell repertoire is generated in the thymus, by V-(D)-J rearrangement. This repertoire is then shaped by intrathymic selection events to generate a peripheral T cell pool of self-MH restricted, non-autoaggressive T cells. Post-thymic interaction of alpha-beta TR with the pMH complexes shapes TR structural and functional avidity. The sequence is that of T cell receptor beta variable 18 from Homo sapiens (Human).